A 337-amino-acid polypeptide reads, in one-letter code: Ribose-phosphate pyrophosphokinase 4 (337 aa).

Position 2 is an N-acetylserine (S2). Residues D158 and H160 each contribute to the Mg(2+) site. The interval 241 to 256 is binding of phosphoribosylpyrophosphate; that stretch reads GCHVVIVDDLVQSGGT.

It belongs to the ribose-phosphate pyrophosphokinase family.

It catalyses the reaction D-ribose 5-phosphate + ATP = 5-phospho-alpha-D-ribose 1-diphosphate + AMP + H(+). The polypeptide is Ribose-phosphate pyrophosphokinase 4 (PRS4) (Arabidopsis thaliana (Mouse-ear cress)).